The following is a 99-amino-acid chain: Large ribosomal subunit protein uL23 (99 aa).

The protein belongs to the universal ribosomal protein uL23 family. Part of the 50S ribosomal subunit. Contacts protein L29, and trigger factor when it is bound to the ribosome.

In terms of biological role, one of the early assembly proteins it binds 23S rRNA. One of the proteins that surrounds the polypeptide exit tunnel on the outside of the ribosome. Forms the main docking site for trigger factor binding to the ribosome. The polypeptide is Large ribosomal subunit protein uL23 (Francisella philomiragia subsp. philomiragia (strain ATCC 25017 / CCUG 19701 / FSC 153 / O#319-036)).